We begin with the raw amino-acid sequence, 829 residues long: Periplasmic nitrate reductase (829 aa).

The segment at residues 1 to 29 (MKMTRRAFVKANAAASAAAVAGVTLPASA) is a signal peptide (tat-type signal). Positions 41 to 97 (IKWDKAPCRFCGTGCSVLVGTQNGRVVATQGDPEAPVNKGLNCIKGYFLSKIMYGKD) constitute a 4Fe-4S Mo/W bis-MGD-type domain. [4Fe-4S] cluster contacts are provided by C48, C51, C55, and C83. Mo-bis(molybdopterin guanine dinucleotide) is bound by residues K85, Q152, N177, C181, 214 to 221 (WGSNMAEM), 245 to 249 (STYYH), 264 to 266 (QSD), M374, Q378, N484, 510 to 511 (SD), K533, D560, and 718 to 727 (TGRVLEHWHT). Position 794 (F794) interacts with substrate. Mo-bis(molybdopterin guanine dinucleotide) is bound by residues N802 and K819.

The protein belongs to the prokaryotic molybdopterin-containing oxidoreductase family. NasA/NapA/NarB subfamily. Component of the periplasmic nitrate reductase NapAB complex composed of NapA and NapB. [4Fe-4S] cluster serves as cofactor. Requires Mo-bis(molybdopterin guanine dinucleotide) as cofactor. Post-translationally, predicted to be exported by the Tat system. The position of the signal peptide cleavage has not been experimentally proven.

It is found in the periplasm. The catalysed reaction is 2 Fe(II)-[cytochrome] + nitrate + 2 H(+) = 2 Fe(III)-[cytochrome] + nitrite + H2O. Its function is as follows. Catalytic subunit of the periplasmic nitrate reductase complex NapAB. Receives electrons from NapB and catalyzes the reduction of nitrate to nitrite. This chain is Periplasmic nitrate reductase, found in Aliivibrio fischeri (strain MJ11) (Vibrio fischeri).